The chain runs to 174 residues: Peptide deformylase (174 aa).

Fe cation is bound by residues Cys91 and His133. The active site involves Glu134. Residue His137 participates in Fe cation binding.

The protein belongs to the polypeptide deformylase family. Fe(2+) is required as a cofactor.

The enzyme catalyses N-terminal N-formyl-L-methionyl-[peptide] + H2O = N-terminal L-methionyl-[peptide] + formate. Functionally, removes the formyl group from the N-terminal Met of newly synthesized proteins. Requires at least a dipeptide for an efficient rate of reaction. N-terminal L-methionine is a prerequisite for activity but the enzyme has broad specificity at other positions. The protein is Peptide deformylase of Fusobacterium nucleatum subsp. nucleatum (strain ATCC 25586 / DSM 15643 / BCRC 10681 / CIP 101130 / JCM 8532 / KCTC 2640 / LMG 13131 / VPI 4355).